The sequence spans 622 residues: WD repeat-containing protein 70 (622 aa).

Basic and acidic residues predominate over residues 36 to 55 (RTAVERSKQTLEAREKEEQL). The tract at residues 36–141 (RTAVERSKQT…DNPVKDIPDS (106 aa)) is disordered. A compositionally biased stretch (low complexity) spans 67-84 (SSSGQKKTKASGSSSGSE). Residues 120 to 132 (SDDEDDEEHEDDD) are compositionally biased toward acidic residues. WD repeat units follow at residues 148–187 (HGTK…ASLQ), 195–236 (CECH…ECVK), 249–289 (GHTA…KHKG), 298–337 (GKPV…HTKF), 344–383 (TPGT…NPLN), 387–434 (GLEN…KIYE), and 437–476 (VTEA…QRGA). The span at 508 to 533 (REPRQRSTRKQLEKDRLDPVKSHKPE) shows a compositional bias: basic and acidic residues. Disordered regions lie at residues 508 to 549 (REPR…GTHG) and 602 to 622 (AEVD…KRKI). Gly residues predominate over residues 539 to 549 (PGRGGRVGTHG). A compositionally biased stretch (acidic residues) spans 604 to 614 (VDSDEEEPDNE).

The protein belongs to the WD repeat GAD-1 family.

The protein is WD repeat-containing protein 70 (wdr70) of Xenopus laevis (African clawed frog).